A 139-amino-acid chain; its full sequence is Ribulose bisphosphate carboxylase small subunit (139 aa).

The protein belongs to the RuBisCO small chain family. Heterohexadecamer of 8 large and 8 small subunits.

Its subcellular location is the plastid. It localises to the chloroplast. Functionally, ruBisCO catalyzes two reactions: the carboxylation of D-ribulose 1,5-bisphosphate, the primary event in carbon dioxide fixation, as well as the oxidative fragmentation of the pentose substrate in the photorespiration process. Both reactions occur simultaneously and in competition at the same active site. Although the small subunit is not catalytic it is essential for maximal activity. The sequence is that of Ribulose bisphosphate carboxylase small subunit from Olisthodiscus luteus (Marine phytoflagellate).